The sequence spans 352 residues: Dead end protein homolog 1 (352 aa).

RRM domains follow at residues 58-136 (SEVY…RSTE) and 138-218 (CELT…WLKP). The residue at position 336 (Arg-336) is an Omega-N-methylarginine.

Interacts with APOBEC3. Isoform 1 and isoform 2 are expressed in testis. Isoform 1 is expressed continuously in post natal (PN) testis although levels are low between PN1 to PN6. Isoform 2 is expressed from PN 20 onwards. Isoform 2 is strongly expressed in meiotic and in post-meiotic germ cells of the testis with highest expression at the elongated spermatid stage (at protein level). Expressed in testis and heart. Expressed in germ cells and genital ridges. Not detected in testicular tumors.

It localises to the nucleus. The protein localises to the cytoplasm. RNA-binding factor that positively regulates gene expression by prohibiting miRNA-mediated gene suppression. Relieves miRNA repression in germline cells. Prohibits the function of several miRNAs by blocking the accessibility of target mRNAs. Sequence-specific RNA-binding factor that binds specifically to U-rich regions (URRs) in the 3' untranslated region (3'-UTR) of several mRNAs. Does not bind to miRNAs. Isoform 1 may play a role during primordial germ cell (PGC) survival. However, does not seem to be essential for PGC migration. This Mus musculus (Mouse) protein is Dead end protein homolog 1 (Dnd1).